The chain runs to 746 residues: SNF-related serine/threonine-protein kinase (746 aa).

Residues 16–269 (YDLDKTLGRG…LEEIESHPWL (254 aa)) enclose the Protein kinase domain. ATP contacts are provided by residues 22-30 (LGRGHFAVV) and Lys-45. Asp-139 acts as the Proton acceptor in catalysis. Phosphoserine is present on Ser-162. Residue Thr-173 is modified to Phosphothreonine; by LKB1. The UBA domain maps to 291 to 334 (SEEEHNSIIQRMVLGDIADRDAIVEALETNRYNHITATYFLLAE). Ser-362, Ser-390, Ser-482, Ser-495, and Ser-518 each carry phosphoserine. Positions 383-414 (SHATVPQSPARAGDSVLNGHRSKGLCDPAKKD) are disordered. Residues 494–503 (ESDDEFDMDE) are compositionally biased toward acidic residues. Residues 494–638 (ESDDEFDMDE…SSSSSPASAA (145 aa)) are disordered. A compositionally biased stretch (basic residues) spans 522 to 532 (VHKRYHRRKSQ). A compositionally biased stretch (low complexity) spans 533 to 542 (GRGSSCSSSE). Arg-534 bears the Omega-N-methylarginine mark. Residues 549-558 (ESRRRLDKDS) show a composition bias toward basic and acidic residues. 2 stretches are compositionally biased toward gly residues: residues 575 to 592 (GSEG…GGGV) and 600 to 614 (QGTG…GGTP). Residues 615 to 638 (SGTAGSSRRCAGPDSSSSSPASAA) show a composition bias toward low complexity.

This sequence belongs to the protein kinase superfamily. CAMK Ser/Thr protein kinase family. It depends on Mg(2+) as a cofactor. Autophosphorylated. Phosphorylation on Thr-173 by STK11/LKB1 in complex with STE20-related adapter-alpha (STRADA) pseudo kinase and CAB39. In terms of tissue distribution, ubiquitously expressed in all tissues examined with highest levels in the brain and testis. Strongly expressed in the pyramidal and granule neurons of the hippocampus and also in the cerebellum.

The protein resides in the nucleus. It catalyses the reaction L-seryl-[protein] + ATP = O-phospho-L-seryl-[protein] + ADP + H(+). The enzyme catalyses L-threonyl-[protein] + ATP = O-phospho-L-threonyl-[protein] + ADP + H(+). Its activity is regulated as follows. Activated by phosphorylation on Thr-173. May play a role in hematopoietic cell proliferation or differentiation. Potential mediator of neuronal apoptosis. This Rattus norvegicus (Rat) protein is SNF-related serine/threonine-protein kinase.